Reading from the N-terminus, the 111-residue chain is DNA-directed RNA polymerase subunit Rpo11 (111 aa).

It belongs to the archaeal Rpo11/eukaryotic RPB11/RPC19 RNA polymerase subunit family. In terms of assembly, part of the RNA polymerase complex.

The protein localises to the cytoplasm. It catalyses the reaction RNA(n) + a ribonucleoside 5'-triphosphate = RNA(n+1) + diphosphate. Functionally, DNA-dependent RNA polymerase (RNAP) catalyzes the transcription of DNA into RNA using the four ribonucleoside triphosphates as substrates. The sequence is that of DNA-directed RNA polymerase subunit Rpo11 from Thermoplasma volcanium (strain ATCC 51530 / DSM 4299 / JCM 9571 / NBRC 15438 / GSS1).